The following is a 570-amino-acid chain: Repressible high-affinity phosphate permease (570 aa).

At 1 to 61 (MSTPQKTAGG…AVAGVGFFTD (61 aa)) the chain is on the cytoplasmic side. The helical transmembrane segment at 62–82 (SYDIFTVSLLTLMLGIVYFPG) threads the bilayer. At 83-95 (EGKMPTTSDTAIK) the chain is on the extracellular side. A helical transmembrane segment spans residues 96 to 116 (LATSAGTVIGQVGFGAAADVF). The Cytoplasmic portion of the chain corresponds to 117–120 (GRKS). The chain crosses the membrane as a helical span at residues 121–141 (MYGLELLFIIFATLAQALASG). Over 142–143 (SP) the chain is Extracellular. The chain crosses the membrane as a helical span at residues 144 to 164 (SINIIGIIIFWRVLMGVGIGG). Residues 165-186 (DYPLSSIITSEFATTKWRGAMM) are Cytoplasmic-facing. A helical membrane pass occupies residues 187–207 (GAVFAMQGLGQLAAAFVMLFV). At 208-237 (TLGFKKSLEAAPTLASCTGDCAVAVDKMWR) the chain is on the extracellular side. The helical transmembrane segment at 238 to 258 (TVIGVGAVPGCIALYYRLTIP) threads the bilayer. Residues 259 to 325 (ETPRYTFDVK…FFRHYSKRKN (67 aa)) are Cytoplasmic-facing. Residues 326-346 (AMLLAGTALSWCFLDIAYYGV) traverse the membrane as a helical segment. Over 347-374 (SLNNATILNVIGYSTTGAKNTYEILYNT) the chain is Extracellular. Residues 375–395 (AVGNLIIVLAGAVPGYWVTVF) traverse the membrane as a helical segment. At 396–403 (TVDTVGRK) the chain is on the cytoplasmic side. The helical transmembrane segment at 404-424 (PIQFMGFGILTILFVVMGFAY) threads the bilayer. Over 425–433 (KHLSPHALL) the chain is Extracellular. A helical transmembrane segment spans residues 434–454 (AIFVLAQFFFNFGPNATTFIV). The Cytoplasmic segment spans residues 455–468 (PGEVFPTRYRSTSH). A helical transmembrane segment spans residues 469–489 (GLSAAMGKIGSIIGQGAIAPL). The Extracellular portion of the chain corresponds to 490-505 (RTRGAVKGGNPNPWMN). A helical transmembrane segment spans residues 506–526 (HVLEIYALFMLLGVGTTFLIP). Residues 527–570 (ETKRKTLEELSGEFDMSGEEEAQRDTTLTEHKTEAPTSSAAVNA) lie on the Cytoplasmic side of the membrane. Residues 537–546 (SGEFDMSGEE) are compositionally biased toward acidic residues. The tract at residues 537 to 570 (SGEFDMSGEEEAQRDTTLTEHKTEAPTSSAAVNA) is disordered. Basic and acidic residues predominate over residues 547-560 (EAQRDTTLTEHKTE). Positions 561-570 (APTSSAAVNA) are enriched in polar residues.

Belongs to the major facilitator superfamily. Sugar transporter (TC 2.A.1.1) family.

Its subcellular location is the cell membrane. With respect to regulation, phosphate transport activity is competitively inhibited by arsenate. High-affinity transporter for external inorganic phosphate. Acts probably as a H(+)-phosphate symporter. This is Repressible high-affinity phosphate permease from Neurospora crassa (strain ATCC 24698 / 74-OR23-1A / CBS 708.71 / DSM 1257 / FGSC 987).